The following is a 279-amino-acid chain: Tryptophan 2,3-dioxygenase (279 aa).

Residues 48 to 52, Tyr110, and Arg114 each bind substrate; that span reads FIVIH. Position 237 (His237) interacts with heme. Thr251 is a substrate binding site.

Belongs to the tryptophan 2,3-dioxygenase family. As to quaternary structure, homotetramer. The cofactor is heme.

It carries out the reaction L-tryptophan + O2 = N-formyl-L-kynurenine. Its pathway is amino-acid degradation; L-tryptophan degradation via kynurenine pathway; L-kynurenine from L-tryptophan: step 1/2. In terms of biological role, heme-dependent dioxygenase that catalyzes the oxidative cleavage of the L-tryptophan (L-Trp) pyrrole ring and converts L-tryptophan to N-formyl-L-kynurenine. Catalyzes the oxidative cleavage of the indole moiety. The protein is Tryptophan 2,3-dioxygenase of Bacillus thuringiensis subsp. konkukian (strain 97-27).